We begin with the raw amino-acid sequence, 227 residues long: Small ribosomal subunit protein uS3 (227 aa).

Residues 24–94 enclose the KH type-2 domain; the sequence is LDEYLEEELG…RVSIEVKELP (71 aa). Residues 207–227 form a disordered region; that stretch reads EEVEDELKELIGKSEDEAEGA.

It belongs to the universal ribosomal protein uS3 family. As to quaternary structure, part of the 30S ribosomal subunit.

In terms of biological role, binds the lower part of the 30S subunit head. The sequence is that of Small ribosomal subunit protein uS3 from Methanopyrus kandleri (strain AV19 / DSM 6324 / JCM 9639 / NBRC 100938).